An 896-amino-acid chain; its full sequence is MDTAEIRRRFVAHFEHNTTVGAHTPVPSASLLLDDPNLLFVNAGMVPFKPYFLGQEAPPYPRATSVQKCVRTPDIEDVGKTTRHGTFFEMCGNFSFGDYFKEGAIELAWDLVTRPLADGGWGLEESKLYPSVYEDDPEAVALWKKVTGLPEERIIRLGKRENYWSMGVPGPGGPCSEILYDRGPDYGPDGDFGPKGEDRYLEIWNLVFMQDELSAVRSKEDFDIAGSLPKKNIDTGMGLERVAFLLQGKANMYEIDVMFPVIQKAEELTGRRYGADHDDDVRFRVVADHVRSSMMLIGDGVTPGNEARGYVLRRLLRRAVRSMRLLGYEDPALPELFPISRDKMGETYTALHRDWERISTVAYAEEHAFRQTLRSGTTIFDQATAELKQAGGSQLSGDKAFALHDTYGFPIDLTLEMAAEQGLAVDEVGFRRLMNEQRQRAKDDAKAKKGQHRDASAYRQVADSLGRPVEFTGYDVVTDEASVRGLVAAGGVVSSAGPGDDVEIILDRTPFYAEGGGQLADQGVIELDNGARVEVRDVQSPVRGLIVHHATVLSGEVSIGLGAHALVDVERRRSISRSHTATHMVHKAFREALGETATQAGSENSPGRFRFDFSAVGAVPESVMADVEARVNEVVLDDLAVHAEVMSQADAVKSGAMALFGEKYGDRVRVVSVGDWARELCGGTHAGSSGKLGVVKLLGESSIGSGVRRVEALVGSDAYRFLAREHVLVAQLSDTLKVRPEQLPERVHDLVEKLREAEKEIERVRVGQLLAAAGELAAGAAKVGPVNLVAHRADGAGGGDVRTLALDVRGRLPQGEPGVVVVIGAVDGKVAVVAALNDEARARGLSANELVRAVGPLVGGKGGGKDDVAQGGGTDASRIDEAITLVTAEVGRVAAG.

Positions 439–456 (QRAKDDAKAKKGQHRDAS) are enriched in basic and acidic residues. Residues 439 to 459 (QRAKDDAKAKKGQHRDASAYR) form a disordered region. 4 residues coordinate Zn(2+): histidine 579, histidine 583, cysteine 681, and histidine 685.

Belongs to the class-II aminoacyl-tRNA synthetase family. Zn(2+) is required as a cofactor.

The protein resides in the cytoplasm. It catalyses the reaction tRNA(Ala) + L-alanine + ATP = L-alanyl-tRNA(Ala) + AMP + diphosphate. Catalyzes the attachment of alanine to tRNA(Ala) in a two-step reaction: alanine is first activated by ATP to form Ala-AMP and then transferred to the acceptor end of tRNA(Ala). Also edits incorrectly charged Ser-tRNA(Ala) and Gly-tRNA(Ala) via its editing domain. The polypeptide is Alanine--tRNA ligase (Nocardioides sp. (strain ATCC BAA-499 / JS614)).